Here is a 233-residue protein sequence, read N- to C-terminus: Uracil-DNA glycosylase (233 aa).

The active-site Proton acceptor is the aspartate 70.

It belongs to the uracil-DNA glycosylase (UDG) superfamily. UNG family.

It is found in the cytoplasm. The enzyme catalyses Hydrolyzes single-stranded DNA or mismatched double-stranded DNA and polynucleotides, releasing free uracil.. Functionally, excises uracil residues from the DNA which can arise as a result of misincorporation of dUMP residues by DNA polymerase or due to deamination of cytosine. This chain is Uracil-DNA glycosylase, found in Helicobacter pylori (strain Shi470).